The sequence spans 135 residues: Global transcriptional regulator Spx 2 (135 aa).

Cysteine 10 is a catalytic residue.

This sequence belongs to the ArsC family. Spx subfamily. As to quaternary structure, interacts with the C-terminal domain of the alpha subunit of the RNAP.

Its subcellular location is the cytoplasm. Global transcriptional regulator that plays a key role in stress response and exerts either positive or negative regulation of genes. Acts by interacting with the C-terminal domain of the alpha subunit of the RNA polymerase (RNAP). This interaction can enhance binding of RNAP to the promoter region of target genes and stimulate their transcription, or block interaction of RNAP with activator. The sequence is that of Global transcriptional regulator Spx 2 from Oceanobacillus iheyensis (strain DSM 14371 / CIP 107618 / JCM 11309 / KCTC 3954 / HTE831).